The chain runs to 249 residues: Histone H1 (249 aa).

Low complexity-rich tracts occupy residues 1-19 (MSDS…QTAS) and 27-43 (KKPA…TTAP). 2 disordered regions span residues 1-53 (MSDS…QQMV) and 105-249 (QTKG…ATKK). The 75-residue stretch at 45 to 119 (THPPTQQMVD…GASGSFKLSA (75 aa)) folds into the H15 domain. Over residues 121 to 134 (SKKEPKPKVSSVEK) the composition is skewed to basic and acidic residues. Positions 146–158 (AKKKTISATKKPK) are enriched in basic residues. Positions 173-190 (KSVDKKKAEKAKAKDAKK) are enriched in basic and acidic residues. Residues 195-233 (KAKPTTAKAKSSAAKPKTPKPKTTSAKPKKVVAAASPKK) are compositionally biased toward low complexity. Basic residues predominate over residues 234-249 (AAAKKPKAKTASATKK).

It belongs to the histone H1/H5 family.

Its subcellular location is the nucleus. It localises to the chromosome. Histones H1 are necessary for the condensation of nucleosome chains into higher-order structures. This is Histone H1 (His1) from Drosophila hydei (Fruit fly).